A 245-amino-acid chain; its full sequence is 1-(5-phosphoribosyl)-5-[(5-phosphoribosylamino)methylideneamino] imidazole-4-carboxamide isomerase (245 aa).

The active-site Proton acceptor is the D8. Residue D131 is the Proton donor of the active site.

It belongs to the HisA/HisF family.

The protein resides in the cytoplasm. The enzyme catalyses 1-(5-phospho-beta-D-ribosyl)-5-[(5-phospho-beta-D-ribosylamino)methylideneamino]imidazole-4-carboxamide = 5-[(5-phospho-1-deoxy-D-ribulos-1-ylimino)methylamino]-1-(5-phospho-beta-D-ribosyl)imidazole-4-carboxamide. It functions in the pathway amino-acid biosynthesis; L-histidine biosynthesis; L-histidine from 5-phospho-alpha-D-ribose 1-diphosphate: step 4/9. The protein is 1-(5-phosphoribosyl)-5-[(5-phosphoribosylamino)methylideneamino] imidazole-4-carboxamide isomerase of Neisseria meningitidis serogroup C / serotype 2a (strain ATCC 700532 / DSM 15464 / FAM18).